The following is a 147-amino-acid chain: Globin (147 aa).

Residues 1–147 (GLSAEQKTAL…LLGVLIENHQ (147 aa)) form the Globin domain. Heme b contacts are provided by His66 and His98.

The protein belongs to the globin family. As to quaternary structure, homodimer.

The sequence is that of Globin from Tritia mutabilis (Sea snail).